The following is a 95-amino-acid chain: MEYSYPFSTDWSTEEIVDVVQFFEGIEQAHEKGIKREVMMAKYRRFKEIVPSQAEEKTIFREFEEASGYISYPVVKQTKEAADGTIIKIVPKKNR.

The protein belongs to the UPF0223 family.

The polypeptide is UPF0223 protein Bsph_1378 (Lysinibacillus sphaericus (strain C3-41)).